The chain runs to 229 residues: Enolase-phosphatase E1 (229 aa).

Residues 207-229 (RDPASHHPQVQRFDDIHPEQIPA) form a disordered region. Residues 218–229 (RFDDIHPEQIPA) show a composition bias toward basic and acidic residues.

The protein belongs to the HAD-like hydrolase superfamily. MasA/MtnC family. In terms of assembly, monomer. The cofactor is Mg(2+).

The catalysed reaction is 5-methylsulfanyl-2,3-dioxopentyl phosphate + H2O = 1,2-dihydroxy-5-(methylsulfanyl)pent-1-en-3-one + phosphate. The protein operates within amino-acid biosynthesis; L-methionine biosynthesis via salvage pathway; L-methionine from S-methyl-5-thio-alpha-D-ribose 1-phosphate: step 3/6. It functions in the pathway amino-acid biosynthesis; L-methionine biosynthesis via salvage pathway; L-methionine from S-methyl-5-thio-alpha-D-ribose 1-phosphate: step 4/6. In terms of biological role, bifunctional enzyme that catalyzes the enolization of 2,3-diketo-5-methylthiopentyl-1-phosphate (DK-MTP-1-P) into the intermediate 2-hydroxy-3-keto-5-methylthiopentenyl-1-phosphate (HK-MTPenyl-1-P), which is then dephosphorylated to form the acireductone 1,2-dihydroxy-3-keto-5-methylthiopentene (DHK-MTPene). This Klebsiella pneumoniae (strain 342) protein is Enolase-phosphatase E1.